The following is a 333-amino-acid chain: Phosphate acyltransferase (333 aa).

This sequence belongs to the PlsX family. In terms of assembly, homodimer. Probably interacts with PlsY.

Its subcellular location is the cytoplasm. The catalysed reaction is a fatty acyl-[ACP] + phosphate = an acyl phosphate + holo-[ACP]. The protein operates within lipid metabolism; phospholipid metabolism. Functionally, catalyzes the reversible formation of acyl-phosphate (acyl-PO(4)) from acyl-[acyl-carrier-protein] (acyl-ACP). This enzyme utilizes acyl-ACP as fatty acyl donor, but not acyl-CoA. The chain is Phosphate acyltransferase from Clostridium beijerinckii (strain ATCC 51743 / NCIMB 8052) (Clostridium acetobutylicum).